The primary structure comprises 604 residues: MLARALLLCAAVALSHAANPCCSNPCQNRGVCMTMGFDQYKCDCTRTGFYGENCSTPEFLTRIKLLLKPTPDTVHYILTHFKGVWNIVNSIPFLRNSIMKYVLTSRSHMIDSPPTYNVHYNYKSWEAFSNLSYYTRALPPVADDCPTPMGVKGKKELPDSKDVVEKLLLRRKFIPDPQGTNMMFAFFAQHFTHQFFKTDLKRGPAFTKGLGHGVDLNHIYGETLDRQHKLRLFKDGKMKYQVIDGEVYPPTVKDTQVEMIYPPHIPAHLQFAVGQEVFGLVPGLMMYATIWLREHNRVCDVLKQEHPEWDDEQLFQTSRLILIGETIKIVIEDYVQHLSGYHFKLKFDPELLFNQQFQYQNRIAAEFNTLYHWHPLLPDTFQIDDQQYNYQQFLYNNSILLEHGLTQFVESFTRQIAGRVAGGRNVPPAVQKVAKASIDQSRQMKYQSLNEYRKRFLLKPYESFEELTGEKEMAAELEALYGDIDAVELYPALLVERPRPDAIFGESMVEMGAPFSLKGLMGNPICSPNYWKPSTFGGEVGFKIVNTASIQSLICNNVKGCPFTSFNVPDPQLTKTVTINASASHSRLEDINPTVLLKGRSTEL.

Positions 1–17 are cleaved as a signal peptide; sequence MLARALLLCAAVALSHA. One can recognise an EGF-like domain in the interval 18 to 55; sequence ANPCCSNPCQNRGVCMTMGFDQYKCDCTRTGFYGENCS. 4 disulfides stabilise this stretch: Cys21–Cys32, Cys22–Cys145, Cys26–Cys42, and Cys44–Cys54. An N-linked (GlcNAc...) asparagine glycan is attached at Asn53. Arg106 contributes to the substrate binding site. Residue Asn130 is glycosylated (N-linked (GlcNAc...) asparagine). The active-site Proton acceptor is His193. Tyr341 serves as a coordination point for substrate. Catalysis depends on Tyr371, which acts as the For cyclooxygenase activity. Residue His374 participates in heme b binding. The N-linked (GlcNAc...) asparagine glycan is linked to Asn396. The residue at position 526 (Cys526) is an S-nitrosocysteine. An intrachain disulfide couples Cys555 to Cys561. At Ser565 the chain carries O-acetylserine. N-linked (GlcNAc...) asparagine glycosylation is present at Asn580.

Belongs to the prostaglandin G/H synthase family. Homodimer. The cofactor is heme b. S-nitrosylation by NOS2 (iNOS) activates enzyme activity. S-nitrosylation may take place on different Cys residues in addition to Cys-526. Post-translationally, acetylated at Ser-565 by SPHK1. During neuroinflammation, acetylation by SPHK1 promotes neuronal secretion of specialized preresolving mediators (SPMs), especially 15-R-lipoxin A4, which results in an increase of phagocytic microglia. Highest expression in kidney and urinary bladder.

It is found in the microsome membrane. The protein resides in the endoplasmic reticulum membrane. The protein localises to the nucleus inner membrane. It localises to the nucleus outer membrane. It carries out the reaction (5Z,8Z,11Z,14Z)-eicosatetraenoate + AH2 + 2 O2 = prostaglandin H2 + A + H2O. The catalysed reaction is (5Z,8Z,11Z,14Z)-eicosatetraenoate + 2 O2 = prostaglandin G2. It catalyses the reaction prostaglandin G2 + AH2 = prostaglandin H2 + A + H2O. The enzyme catalyses (5Z,8Z,11Z,14Z,17Z)-eicosapentaenoate + 2 O2 = prostaglandin G3. It carries out the reaction prostaglandin G3 + AH2 = prostaglandin H3 + A + H2O. The catalysed reaction is (8Z,11Z,14Z)-eicosatrienoate + 2 O2 = prostaglandin G1. It catalyses the reaction prostaglandin G1 + AH2 = prostaglandin H1 + A + H2O. The enzyme catalyses 2-(5Z,8Z,11Z,14Z)-eicosatetraenoyl-sn-glycero-3-phosphoethanolamine + 2 O2 = 2-(prostaglandin G2)-sn-glycero-3-phosphoethanolamine. It carries out the reaction 2-(prostaglandin G2)-sn-glycero-3-phosphoethanolamine + AH2 = 2-(prostaglandin H2)-sn-glycero-3-phosphoethanolamine + A + H2O. The catalysed reaction is 2-(5Z,8Z,11Z,14Z)-eicosatetraenoyl-sn-glycero-3-phosphocholine + 2 O2 = 2-(prostaglandin G2)-sn-glycero-3-phosphocholine. It catalyses the reaction 2-(prostaglandin G2)-sn-glycero-3-phosphocholine + AH2 = 2-(prostaglandin H2)-sn-glycero-3-phosphocholine + A + H2O. The enzyme catalyses (15S)-hydroperoxy-(5Z,8Z,11Z,13E)-eicosatetraenoate + AH2 = (15S)-hydroxy-(5Z,8Z,11Z,13E)-eicosatetraenoate + A + H2O. It carries out the reaction 2-(5Z,8Z,11Z,14Z)-eicosatetraenoyl-sn-glycero-3-phosphocholine + AH2 + O2 = 2-[(15S)-hydroxy-(5Z,8Z,11Z,13E)-eicosatetraenoyl]-sn-glycero-3-phosphocholine + A + H2O. The catalysed reaction is 2-(5Z,8Z,11Z,14Z)-eicosatetraenoyl-sn-glycero-3-phosphocholine + AH2 + O2 = 2-[(15R)-hydroxy-(5Z,8Z,11Z,13E)-eicosatetraenoyl]-sn-glycero-3-phosphocholine + A + H2O. It catalyses the reaction 2-(5Z,8Z,11Z,14Z)-eicosatetraenoyl-sn-glycero-3-phosphocholine + AH2 + O2 = 2-[(11R)-hydroxy-(5Z,8Z,12E,14Z)-eicosatetraenoyl]-sn-glycero-3-phosphocholine + A + H2O. The enzyme catalyses (9Z,12Z)-octadecadienoate + AH2 + O2 = 9-hydroxy-(10E,12Z)-octadecadienoate + A + H2O. It carries out the reaction (9Z,12Z)-octadecadienoate + AH2 + O2 = 13-hydroxy-(9Z,11E)-octadecadienoate + A + H2O. The catalysed reaction is (5Z,8Z,11Z,14Z)-eicosatetraenoate + AH2 + O2 = (15R)-hydroxy-(5Z,8Z,11Z,13E)-eicosatetraenoate + A + H2O. It catalyses the reaction (5Z,8Z,11Z,14Z)-eicosatetraenoate + AH2 + O2 = (11R)-hydroxy-(5Z,8Z,12E,14Z)-eicosatetraenoate + A + H2O. The enzyme catalyses (5Z,8Z,11Z,14Z,17Z)-eicosapentaenoate + AH2 + O2 = (11R)-hydroxy-(5Z,8Z,12E,14Z,17Z)-eicosapentaenoate + A + H2O. It carries out the reaction (5Z,8Z,11Z,14Z,17Z)-eicosapentaenoate + AH2 + O2 = (18S)-hydroxy-(5Z,8Z,11Z,14Z,16E)-eicosapentaenoate + A + H2O. The catalysed reaction is (5Z,8Z,11Z,14Z,17Z)-eicosapentaenoate + AH2 + O2 = (18R)-hydroxy-(5Z,8Z,11Z,14Z,16E)-eicosapentaenoate + A + H2O. It catalyses the reaction (5Z,8Z,11Z,14Z,17Z)-eicosapentaenoate + AH2 + O2 = (15R)-hydroxy-(5Z,8Z,11Z,13E,17Z)-eicosapentaenoate + A + H2O. The enzyme catalyses (5Z,8Z,11Z,14Z,17Z)-eicosapentaenoate + AH2 + O2 = (15S)-hydroxy-(5Z,8Z,11Z,13E,17Z)-eicosapentaenoate + A + H2O. It carries out the reaction (7Z,10Z,13Z,16Z,19Z)-docosapentaenoate + AH2 + O2 = 13R-hydroxy-(7Z,10Z,14E,16Z,19Z)-docosapentaenoate + A + H2O. The catalysed reaction is (4Z,7Z,10Z,13Z,16Z,19Z)-docosahexaenoate + AH2 + O2 = 13-hydroxy-(4Z,7Z,10Z,14E,16Z,19Z)-docosahexaenoate + A + H2O. It catalyses the reaction (5S)-hydroxy-(6E,8Z,11Z,14Z)-eicosatetraenoate + AH2 + O2 = (5S,15R)-dihydroxy-(6E,8Z,11Z,13E)-eicosatetraenoate + A + H2O. The enzyme catalyses (4Z,7Z,10Z,13Z,16Z,19Z)-docosahexaenoate + AH2 + O2 = 17R-hydroxy-(4Z,7Z,10Z,13Z,15E,19Z)-docosahexaenoate + A + H2O. It carries out the reaction (5S)-hydroxy-(6E,8Z,11Z,14Z)-eicosatetraenoate + AH2 + O2 = (5S,15S)-dihydroxy-(6E,8Z,11Z,13E)-eicosatetraenoate + A + H2O. The catalysed reaction is (5S)-hydroxy-(6E,8Z,11Z,14Z)-eicosatetraenoate + AH2 + O2 = (5S,11R)-dihydroxy-(6E,8Z,12E,14Z)-eicosatetraenoate + A + H2O. It catalyses the reaction 2-(5Z,8Z,11Z,14Z-eicosatetraenoyl)-glycerol + 2 O2 = 2-glyceryl-prostaglandin G2. The enzyme catalyses 2-glyceryl-prostaglandin G2 + AH2 = 2-glyceryl-prostaglandin H2 + A + H2O. It carries out the reaction (5Z,8Z,11Z,14Z)-eicosatetraenoate + O2 = (15R)-hydroperoxy-(5Z,8Z,11Z,13E)-eicosatetraenoate. The catalysed reaction is (5Z,8Z,11Z,14Z)-eicosatetraenoate + O2 = 11R-hydroperoxy-(5Z,8Z,12E,14Z)-eicosatetraenoate. It catalyses the reaction (9Z,12Z)-octadecadienoate + AH2 + O2 = (9R)-hydroxy-(10E,12Z)-octadecadienoate + A + H2O. The enzyme catalyses (9Z,12Z)-octadecadienoate + AH2 + O2 = (9S)-hydroxy-(10E,12Z)-octadecadienoate + A + H2O. It carries out the reaction (9Z,12Z)-octadecadienoate + AH2 + O2 = (13S)-hydroxy-(9Z,11E)-octadecadienoate + A + H2O. The catalysed reaction is (9Z,12Z)-octadecadienoate + AH2 + O2 = (13R)-hydroxy-(9Z,11E)-octadecadienoate + A + H2O. It functions in the pathway lipid metabolism; prostaglandin biosynthesis. Its function is as follows. Dual cyclooxygenase and peroxidase in the biosynthesis pathway of prostanoids, a class of C20 oxylipins mainly derived from arachidonate ((5Z,8Z,11Z,14Z)-eicosatetraenoate, AA, C20:4(n-6)), with a particular role in the inflammatory response. The cyclooxygenase activity oxygenates AA to the hydroperoxy endoperoxide prostaglandin G2 (PGG2), and the peroxidase activity reduces PGG2 to the hydroxy endoperoxide prostaglandin H2 (PGH2), the precursor of all 2-series prostaglandins and thromboxanes. This complex transformation is initiated by abstraction of hydrogen at carbon 13 (with S-stereochemistry), followed by insertion of molecular O2 to form the endoperoxide bridge between carbon 9 and 11 that defines prostaglandins. The insertion of a second molecule of O2 (bis-oxygenase activity) yields a hydroperoxy group in PGG2 that is then reduced to PGH2 by two electrons. Similarly catalyzes successive cyclooxygenation and peroxidation of dihomo-gamma-linoleate (DGLA, C20:3(n-6)) and eicosapentaenoate (EPA, C20:5(n-3)) to corresponding PGH1 and PGH3, the precursors of 1- and 3-series prostaglandins. In an alternative pathway of prostanoid biosynthesis, converts 2-arachidonoyl lysophopholipids to prostanoid lysophopholipids, which are then hydrolyzed by intracellular phospholipases to release free prostanoids. Metabolizes 2-arachidonoyl glycerol yielding the glyceryl ester of PGH2, a process that can contribute to pain response. Generates lipid mediators from n-3 and n-6 polyunsaturated fatty acids (PUFAs) via a lipoxygenase-type mechanism. Oxygenates PUFAs to hydroperoxy compounds and then reduces them to corresponding alcohols. Plays a role in the generation of resolution phase interaction products (resolvins) during both sterile and infectious inflammation. Metabolizes docosahexaenoate (DHA, C22:6(n-3)) to 17R-HDHA, a precursor of the D-series resolvins (RvDs). As a component of the biosynthetic pathway of E-series resolvins (RvEs), converts eicosapentaenoate (EPA, C20:5(n-3)) primarily to 18S-HEPE that is further metabolized by ALOX5 and LTA4H to generate 18S-RvE1 and 18S-RvE2. In vascular endothelial cells, converts docosapentaenoate (DPA, C22:5(n-3)) to 13R-HDPA, a precursor for 13-series resolvins (RvTs) shown to activate macrophage phagocytosis during bacterial infection. In activated leukocytes, contributes to oxygenation of hydroxyeicosatetraenoates (HETE) to diHETES (5,15-diHETE and 5,11-diHETE). Can also use linoleate (LA, (9Z,12Z)-octadecadienoate, C18:2(n-6)) as substrate and produce hydroxyoctadecadienoates (HODEs) in a regio- and stereospecific manner,being (9R)-HODE ((9R)-hydroxy-(10E,12Z)-octadecadienoate) and (13S)-HODE ((13S)-hydroxy-(9Z,11E)-octadecadienoate) its major products. During neuroinflammation, plays a role in neuronal secretion of specialized preresolving mediators (SPMs) 15R-lipoxin A4 that regulates phagocytic microglia. This is Prostaglandin G/H synthase 2 (PTGS2) from Oryctolagus cuniculus (Rabbit).